Reading from the N-terminus, the 255-residue chain is Sulfate transporter CysZ (255 aa).

The next 4 membrane-spanning stretches (helical) occupy residues 26-46, 71-91, 150-170, and 211-231; these read LFVL…IYFA, LLWP…FTML, LFIL…WLLF, and IVYL…AAVA.

This sequence belongs to the CysZ family.

It localises to the cell inner membrane. In terms of biological role, high affinity, high specificity proton-dependent sulfate transporter, which mediates sulfate uptake. Provides the sulfur source for the cysteine synthesis pathway. This chain is Sulfate transporter CysZ, found in Pseudomonas fluorescens (strain SBW25).